The following is a 443-amino-acid chain: Carboxypeptidase M (443 aa).

The first 17 residues, methionine 1–alanine 17, serve as a signal peptide directing secretion. The region spanning arginine 21–valine 311 is the Peptidase M14 domain. Asparagine 38 is a glycosylation site (N-linked (GlcNAc...) asparagine). 2 residues coordinate Zn(2+): histidine 83 and glutamate 86. 3 disulfide bridges follow: cysteine 138–cysteine 285, cysteine 242–cysteine 284, and cysteine 341–cysteine 410. Asparagine 164 carries N-linked (GlcNAc...) asparagine glycosylation. Residue histidine 190 participates in Zn(2+) binding. Residue glutamate 281 is the Proton donor/acceptor of the active site. Residue asparagine 363 is glycosylated (N-linked (GlcNAc...) asparagine). Residue serine 423 is the site of GPI-anchor amidated serine attachment. The propeptide at alanine 424–lysine 443 is removed in mature form.

This sequence belongs to the peptidase M14 family. Zn(2+) is required as a cofactor.

It localises to the cell membrane. The enzyme catalyses Cleavage of C-terminal arginine or lysine residues from polypeptides.. Functionally, specifically removes C-terminal basic residues (Arg or Lys) from peptides and proteins. It is believed to play important roles in the control of peptide hormone and growth factor activity at the cell surface, and in the membrane-localized degradation of extracellular proteins. This is Carboxypeptidase M (Cpm) from Mus musculus (Mouse).